A 215-amino-acid chain; its full sequence is UPF0502 protein PP_2442 (215 aa).

This sequence belongs to the UPF0502 family.

The protein is UPF0502 protein PP_2442 of Pseudomonas putida (strain ATCC 47054 / DSM 6125 / CFBP 8728 / NCIMB 11950 / KT2440).